A 389-amino-acid polypeptide reads, in one-letter code: Succinate--CoA ligase [ADP-forming] subunit beta (389 aa).

Residues 9 to 244 (KQLLAEYGIP…KTQEDETEVT (236 aa)) form the ATP-grasp domain. ATP-binding positions include lysine 46, 53 to 55 (GRG), glycine 102, and glutamate 107. Mg(2+)-binding residues include asparagine 199 and aspartate 213. Residues asparagine 264 and 321–323 (GIV) contribute to the substrate site.

This sequence belongs to the succinate/malate CoA ligase beta subunit family. As to quaternary structure, heterotetramer of two alpha and two beta subunits. It depends on Mg(2+) as a cofactor.

It carries out the reaction succinate + ATP + CoA = succinyl-CoA + ADP + phosphate. It catalyses the reaction GTP + succinate + CoA = succinyl-CoA + GDP + phosphate. The protein operates within carbohydrate metabolism; tricarboxylic acid cycle; succinate from succinyl-CoA (ligase route): step 1/1. Its function is as follows. Succinyl-CoA synthetase functions in the citric acid cycle (TCA), coupling the hydrolysis of succinyl-CoA to the synthesis of either ATP or GTP and thus represents the only step of substrate-level phosphorylation in the TCA. The beta subunit provides nucleotide specificity of the enzyme and binds the substrate succinate, while the binding sites for coenzyme A and phosphate are found in the alpha subunit. The polypeptide is Succinate--CoA ligase [ADP-forming] subunit beta (Xanthomonas oryzae pv. oryzae (strain MAFF 311018)).